A 414-amino-acid chain; its full sequence is 3-oxoacyl-[acyl-carrier-protein] synthase 2 (414 aa).

The 409-residue stretch at 3-411 folds into the Ketosynthase family 3 (KS3) domain; it reads KRRVVITGLG…GTNGTLVLSR (409 aa). Residues cysteine 164, histidine 304, and histidine 341 each act as for beta-ketoacyl synthase activity in the active site.

Belongs to the thiolase-like superfamily. Beta-ketoacyl-ACP synthases family. Homodimer.

The enzyme catalyses a fatty acyl-[ACP] + malonyl-[ACP] + H(+) = a 3-oxoacyl-[ACP] + holo-[ACP] + CO2. It carries out the reaction (9Z)-hexadecenoyl-[ACP] + malonyl-[ACP] + H(+) = 3-oxo-(11Z)-octadecenoyl-[ACP] + holo-[ACP] + CO2. It functions in the pathway lipid metabolism; fatty acid biosynthesis. Its function is as follows. Involved in the type II fatty acid elongation cycle. Catalyzes the elongation of a wide range of acyl-ACP by the addition of two carbons from malonyl-ACP to an acyl acceptor. Can efficiently catalyze the conversion of palmitoleoyl-ACP (cis-hexadec-9-enoyl-ACP) to cis-vaccenoyl-ACP (cis-octadec-11-enoyl-ACP), an essential step in the thermal regulation of fatty acid composition. This chain is 3-oxoacyl-[acyl-carrier-protein] synthase 2 (fabF), found in Coxiella burnetii (strain RSA 493 / Nine Mile phase I).